The sequence spans 188 residues: Inactive cysteine S-methyltransferase OspZ (188 aa).

This sequence belongs to the NleE/OspZ family.

It is found in the secreted. The protein localises to the host cytoplasm. The protein resides in the host nucleus. In terms of biological role, inactive effector protein: in contrast to other members of the family, does not have the ability to inhibit host cell NF-kappa-B activation. Probably lacks cysteine S-methyltransferase activity due to its inability to bind S-adenosyl-L-methionine at the C-terminus. This chain is Inactive cysteine S-methyltransferase OspZ, found in Shigella flexneri.